The sequence spans 314 residues: Probable cell division protein WhiA (314 aa).

Positions 274-308 (SLKELGEMISTGPISKSGVNHRLRKLNELADKIRS) form a DNA-binding region, H-T-H motif.

The protein belongs to the WhiA family.

In terms of biological role, involved in cell division and chromosome segregation. The sequence is that of Probable cell division protein WhiA from Staphylococcus haemolyticus (strain JCSC1435).